The following is a 116-amino-acid chain: Putative pterin-4-alpha-carbinolamine dehydratase 1 (116 aa).

Belongs to the pterin-4-alpha-carbinolamine dehydratase family.

It catalyses the reaction (4aS,6R)-4a-hydroxy-L-erythro-5,6,7,8-tetrahydrobiopterin = (6R)-L-erythro-6,7-dihydrobiopterin + H2O. The polypeptide is Putative pterin-4-alpha-carbinolamine dehydratase 1 (Gloeobacter violaceus (strain ATCC 29082 / PCC 7421)).